Here is a 244-residue protein sequence, read N- to C-terminus: Ribonuclease 3 (244 aa).

The RNase III domain occupies 21–148; that stretch reads DHAPLLEAWG…MLGAIYLHHG (128 aa). A Mg(2+)-binding site is contributed by E61. D65 is a catalytic residue. D134 and E137 together coordinate Mg(2+). The active site involves E137. Positions 175 to 242 constitute a DRBM domain; that stretch reads DWKTVLLEKL…AKQAVQKLNE (68 aa).

Belongs to the ribonuclease III family. Homodimer. The cofactor is Mg(2+).

The protein resides in the cytoplasm. The enzyme catalyses Endonucleolytic cleavage to 5'-phosphomonoester.. Functionally, digests double-stranded RNA. Involved in the processing of primary rRNA transcript to yield the immediate precursors to the large and small rRNAs (23S and 16S). Processes some mRNAs, and tRNAs when they are encoded in the rRNA operon. Processes pre-crRNA and tracrRNA of type II CRISPR loci if present in the organism. The sequence is that of Ribonuclease 3 from Corynebacterium jeikeium (strain K411).